A 275-amino-acid chain; its full sequence is Anthracycline biosynthesis protein DauV (275 aa).

2 VOC domains span residues 8 to 136 (APAW…VWRK) and 150 to 263 (SVGW…VVEL).

It functions in the pathway antibiotic biosynthesis; daunorubicin biosynthesis. Its pathway is antibiotic biosynthesis; carminomycin biosynthesis. In terms of biological role, involved in the biosynthesis of the anthracyclines carminomycin and daunorubicin (daunomycin) which are aromatic polyketide antibiotics that exhibit high cytotoxicity and are widely applied in the chemotherapy of a variety of cancers. Acts jointly with DoxA in the conversion of 13-deoxycarminomycin and 13-deoxydaunorubicin to yield carminomycin and daunorubicin, respectively. This Streptomyces sp. (strain C5) protein is Anthracycline biosynthesis protein DauV (dauV).